The following is a 988-amino-acid chain: Transcriptional regulator of yeast form adherence 5 (988 aa).

C2H2-type zinc fingers lie at residues 7–29 and 35–59; these read YICA…ERSH and FHCL…TVHH. Over residues 59–83 the composition is skewed to polar residues; that stretch reads HTNLNPSTLPSNKSLKNPTTNPLDL. Disordered stretches follow at residues 59-129 and 174-229; these read HTNL…SSVG and SMES…SNNN. A compositionally biased stretch (low complexity) spans 84–106; sequence SNNEGTTTTTKTGNRKNNSNKNG. Polar residues-rich tracts occupy residues 113–129 and 174–208; these read TNPN…SSVG and SMES…EIVL.

Its subcellular location is the nucleus. Transcription factor required for yeast cell adherence to silicone substrate. In Candida albicans (strain SC5314 / ATCC MYA-2876) (Yeast), this protein is Transcriptional regulator of yeast form adherence 5 (TRY5).